The sequence spans 1738 residues: Gag-Pol polyprotein (1738 aa).

A lipid anchor (N-myristoyl glycine; by host) is attached at Gly-2. Pro residues predominate over residues Pro-110–Thr-124. Positions Pro-110–Arg-218 are disordered. Positions Pro-111–Pro-114 match the PTAP/PSAP motif motif. The LYPX(n)L motif motif lies at Leu-130–Leu-134. A compositionally biased stretch (pro residues) spans Asp-161–Pro-173. The PPXY motif motif lies at Pro-162–Tyr-165. Ser-192 is modified (phosphoserine; by host). Residues Gly-345–Val-393 are interaction with host PIAS4. The tract at residues Ile-430–Glu-435 is interaction with host UBE2I. Composition is skewed to basic and acidic residues over residues Arg-434–Arg-466 and Arg-486–Leu-499. Disordered regions lie at residues Arg-434–Leu-499 and Trp-513–Thr-553. Positions Glu-438–Leu-478 form a coiled coil. The CCHC-type zinc finger occupies Asp-502 to Lys-519. Residues Val-561 to Leu-631 form the Peptidase A2 domain. The active-site Protease; shared with dimeric partner is Asp-566. The Reverse transcriptase domain maps to Leu-741–Leu-932. 7 residues coordinate Mg(2+): Asp-809, Asp-883, Asp-884, Asp-1183, Glu-1221, Asp-1242, and Asp-1312. The RNase H type-1 domain maps to Pro-1174–Thr-1320. Residues His-1387 to Cys-1427 form an HHCC-type zinc finger. The Integrase catalytic domain maps to Arg-1444 to Pro-1602. Mg(2+) is bound by residues Asp-1455 and Asp-1514.

This sequence belongs to the retroviral Pol polyprotein family. Homohexamer; further associates as homomultimer. The virus core is composed of a lattice formed from hexagonal rings, each containing six capsid monomers. As to quaternary structure, interacts (via PPXY motif) with host NEDD4. Interacts (via PSAP motif) with host TSG101. Interacts (via LYPX(n)L motif) with host PDCD6IP. In terms of assembly, the reverse transcriptase is a monomer (Potential). Interacts (via RNase domains) with host release factor ETF1; this interaction is essential for translational readthrough of amber codon between viral gag and pol genes, as well as for viral replication. Homodimer. It depends on Mg(2+) as a cofactor. Post-translationally, ubiquitinated by ITCH. Gag can recruit the ubiquitin ligase Itch in an L domain-independent manner to facilitate virus release via a mechanism that involves Gag ubiquitination. Specific enzymatic cleavages by the viral protease yield mature proteins. The protease is released by autocatalytic cleavage. The polyprotein is cleaved during and after budding, this process is termed maturation. In terms of processing, sumoylated; which is required for virus replication. Post-translationally, phosphorylated on serine residues.

Its subcellular location is the virion. It localises to the host cell membrane. The protein localises to the host late endosome membrane. The protein resides in the host endosome. It is found in the host multivesicular body. Its subcellular location is the host cytoplasm. The catalysed reaction is DNA(n) + a 2'-deoxyribonucleoside 5'-triphosphate = DNA(n+1) + diphosphate. The enzyme catalyses Endonucleolytic cleavage to 5'-phosphomonoester.. With respect to regulation, most efficiently inhibited by Amprenavir, which is able to block Gag-Pol processing in infected cells. Functionally, plays a role in budding and is processed by the viral protease during virion maturation outside the cell. During budding, it recruits, in a PPXY-dependent or independent manner, Nedd4-like ubiquitin ligases that conjugate ubiquitin molecules to Gag-Pol, or to Gag-Pol binding host factors. Interaction with HECT ubiquitin ligases probably links the viral protein to the host ESCRT pathway and facilitates release. Targets Gag and gag-pol polyproteins to the plasma membrane via a multipartite membrane binding signal, that includes its myristoylated N-terminus. Also mediates nuclear localization of the pre-integration complex. Its function is as follows. Constituent of the pre-integration complex (PIC) which tethers the latter to mitotic chromosomes. This allows the integration of the viral genome into the host DNA. In terms of biological role, forms the spherical core of the virion that encapsulates the genomic RNA-nucleocapsid complex. Functionally, involved in the packaging and encapsidation of two copies of the genome. Binds with high affinity to conserved UCUG elements within the packaging signal, located near the 5'-end of the genome. This binding is dependent on genome dimerization. Acts as a nucleic acid chaperone which is involved in rearrangement of nucleic acid secondary structures during gRNA retrotranscription. The aspartyl protease mediates proteolytic cleavages of Gag and Gag-Pol polyproteins during or shortly after the release of the virion from the plasma membrane. Cleavages take place as an ordered, step-wise cascade to yield mature proteins. This process is called maturation. Displays maximal activity during the budding process just prior to particle release from the cell (Potential). Cleaves the translation initiation factor eIF4G leading to the inhibition of host cap-dependent translation. Its function is as follows. RT is a multifunctional enzyme that converts the viral dimeric RNA genome into dsDNA in the cytoplasm, shortly after virus entry into the cell. This enzyme displays a DNA polymerase activity that can copy either DNA or RNA templates, and a ribonuclease H (RNase H) activity that cleaves the RNA strand of RNA-DNA heteroduplexes in a partially processive 3' to 5' endonucleasic mode. Conversion of viral genomic RNA into dsDNA requires many steps. A tRNA binds to the primer-binding site (PBS) situated at the 5' end of the viral RNA. RT uses the 3' end of the tRNA primer to perform a short round of RNA-dependent minus-strand DNA synthesis. The reading proceeds through the U5 region and ends after the repeated (R) region which is present at both ends of viral RNA. The portion of the RNA-DNA heteroduplex is digested by the RNase H, resulting in a ssDNA product attached to the tRNA primer. This ssDNA/tRNA hybridizes with the identical R region situated at the 3' end of viral RNA. This template exchange, known as minus-strand DNA strong stop transfer, can be either intra- or intermolecular. RT uses the 3' end of this newly synthesized short ssDNA to perform the RNA-dependent minus-strand DNA synthesis of the whole template. RNase H digests the RNA template except for a polypurine tract (PPT) situated at the 5' end of the genome. It is not clear if both polymerase and RNase H activities are simultaneous. RNase H probably can proceed both in a polymerase-dependent (RNA cut into small fragments by the same RT performing DNA synthesis) and a polymerase-independent mode (cleavage of remaining RNA fragments by free RTs). Secondly, RT performs DNA-directed plus-strand DNA synthesis using the PPT that has not been removed by RNase H as primers. PPT and tRNA primers are then removed by RNase H. The 3' and 5' ssDNA PBS regions hybridize to form a circular dsDNA intermediate. Strand displacement synthesis by RT to the PBS and PPT ends produces a blunt ended, linear dsDNA copy of the viral genome that includes long terminal repeats (LTRs) at both ends. In terms of biological role, catalyzes viral DNA integration into the host chromosome, by performing a series of DNA cutting and joining reactions. This enzyme activity takes place after virion entry into a cell and reverse transcription of the RNA genome in dsDNA. The first step in the integration process is 3' processing. This step requires a complex comprising the viral genome, matrix protein and integrase. This complex is called the pre-integration complex (PIC). The integrase protein removes 2 nucleotides from each 3' end of the viral DNA, leaving recessed CA OH's at the 3' ends. In the second step that requires cell division, the PIC enters cell nucleus. In the third step, termed strand transfer, the integrase protein joins the previously processed 3' ends to the 5' ends of strands of target cellular DNA at the site of integration. The last step is viral DNA integration into host chromosome. The protein is Gag-Pol polyprotein (pol) of Mus musculus (Mouse).